A 177-amino-acid polypeptide reads, in one-letter code: Adenine phosphoribosyltransferase (177 aa).

Belongs to the purine/pyrimidine phosphoribosyltransferase family. In terms of assembly, homodimer.

It is found in the cytoplasm. It carries out the reaction AMP + diphosphate = 5-phospho-alpha-D-ribose 1-diphosphate + adenine. It functions in the pathway purine metabolism; AMP biosynthesis via salvage pathway; AMP from adenine: step 1/1. Its function is as follows. Catalyzes a salvage reaction resulting in the formation of AMP, that is energically less costly than de novo synthesis. The polypeptide is Adenine phosphoribosyltransferase (Cutibacterium acnes (strain DSM 16379 / KPA171202) (Propionibacterium acnes)).